Consider the following 234-residue polypeptide: Ubiquitin carboxyl-terminal hydrolase 3 (234 aa).

Residues 12-232 form the UCH catalytic domain; it reads RWLPLESNPD…LNFNLIAISK (221 aa). Cys-101 serves as the catalytic Nucleophile. His-172 acts as the Proton donor in catalysis.

It belongs to the peptidase C12 family.

The enzyme catalyses Thiol-dependent hydrolysis of ester, thioester, amide, peptide and isopeptide bonds formed by the C-terminal Gly of ubiquitin (a 76-residue protein attached to proteins as an intracellular targeting signal).. This chain is Ubiquitin carboxyl-terminal hydrolase 3, found in Arabidopsis thaliana (Mouse-ear cress).